The chain runs to 736 residues: Segment polarity protein dishevelled homolog DVL-2 (736 aa).

A DIX domain is found at Val11–Asp93. The interval Asp93–Ser255 is disordered. The span at Val111 to Pro122 shows a compositional bias: pro residues. The segment covering Leu159 to Glu171 has biased composition (basic and acidic residues). Over residues Glu193–Leu208 the composition is skewed to low complexity. Phosphoserine is present on Ser211. The span at Ser218–Ser230 shows a compositional bias: polar residues. The segment covering Leu232 to Pro244 has biased composition (basic residues). One can recognise a PDZ domain in the interval Thr267 to Asp339. The 75-residue stretch at Pro433–Asp507 folds into the DEP domain. Positions Pro558–Tyr568 are enriched in pro residues. The interval Pro558 to His665 is disordered. Composition is skewed to low complexity over residues Ala581–Asp598 and Ser614–Gly629.

The protein belongs to the DSH family. In terms of assembly, interacts through its PDZ domain with the C-terminal regions of VANGL1 and VANGL2. Interacts with Rac. Interacts with ARRB1; the interaction is enhanced by phosphorylation of DVL1. Can form large oligomers (via DIX domain). Interacts (via DIX domain) with DIXDC1 (via DIX domain). Interacts (via DEP domain) with AP2M1 and the AP-2 complex. Interacts with FAM105B/otulin. Interacts with DCDC2. Interacts (when phosphorylated) with FOXK1 and FOXK2; the interaction induces DVL2 nuclear translocation. Interacts with MAPK15. Interacts with PKD1 (via extracellular domain). Interacts with LMBR1L. Phosphorylated by CSNK1D. WNT3A induces DVL2 phosphorylation by CSNK1E and MARK kinases. In terms of processing, ubiquitinated via 'Lys-63'-linked polyubiquitin chains; leading to its autophagy-mediated degradation. Ubiquitous.

It is found in the cell membrane. Its subcellular location is the cytoplasm. The protein localises to the cytosol. It localises to the cytoplasmic vesicle. The protein resides in the nucleus. Plays a role in the signal transduction pathways mediated by multiple Wnt genes. Participates both in canonical and non-canonical Wnt signaling by binding to the cytoplasmic C-terminus of frizzled family members and transducing the Wnt signal to down-stream effectors. Promotes internalization and degradation of frizzled proteins upon Wnt signaling. This Mus musculus (Mouse) protein is Segment polarity protein dishevelled homolog DVL-2 (Dvl2).